We begin with the raw amino-acid sequence, 124 residues long: Urease subunit beta (124 aa).

It belongs to the urease beta subunit family. Heterotrimer of UreA (gamma), UreB (beta) and UreC (alpha) subunits. Three heterotrimers associate to form the active enzyme.

It localises to the cytoplasm. It carries out the reaction urea + 2 H2O + H(+) = hydrogencarbonate + 2 NH4(+). It participates in nitrogen metabolism; urea degradation; CO(2) and NH(3) from urea (urease route): step 1/1. The protein is Urease subunit beta of Ureaplasma urealyticum serovar 10 (strain ATCC 33699 / Western).